Reading from the N-terminus, the 266-residue chain is Derlin-1 (266 aa).

The Cytoplasmic portion of the chain corresponds to 1–20 (MSSPGEFYNSLPPITKAYGT). The helical transmembrane segment at 21 to 41 (LCFFTTVATQLGLVAPVHIAL) threads the bilayer. Residues 42–55 (IPELVLKQFQIWRL) lie on the Lumenal side of the membrane. The helical transmembrane segment at 56-76 (ITNLFFLGGFSINFGIRLLMI) threads the bilayer. The Cytoplasmic segment spans residues 77–94 (ARYGVQLEKGPFERRTAD). The chain crosses the membrane as a helical span at residues 95 to 115 (FLWMMIFGSFTLLVLSVIPFF). The Lumenal segment spans residues 116–156 (WTPFLGVSLVFMLLYLWSREFPNANISLYGLVTLKAFYLPW). The helical transmembrane segment at 157-177 (AMLALDVIFGSPIMPDLLGII) threads the bilayer. The Cytoplasmic portion of the chain corresponds to 178-266 (AGHLYYFLTV…FRGRSYRLTD (89 aa)). A disordered region spans residues 235-266 (GGVGGGGAYSSARAPPESSNTAFRGRSYRLTD).

This sequence belongs to the derlin family.

The protein resides in the endoplasmic reticulum membrane. In terms of biological role, may be involved in the degradation process of specific misfolded endoplasmic reticulum (ER) luminal proteins. The protein is Derlin-1 (DER1) of Arabidopsis thaliana (Mouse-ear cress).